Consider the following 145-residue polypeptide: UPF0201 protein M164_1168 (145 aa).

This sequence belongs to the UPF0201 family.

The protein is UPF0201 protein M164_1168 of Saccharolobus islandicus (strain M.16.4 / Kamchatka #3) (Sulfolobus islandicus).